The chain runs to 236 residues: Small ribosomal subunit protein uS2c (236 aa).

It belongs to the universal ribosomal protein uS2 family.

It localises to the plastid. Its subcellular location is the chloroplast. The chain is Small ribosomal subunit protein uS2c (rps2) from Carica papaya (Papaya).